Here is a 248-residue protein sequence, read N- to C-terminus: Stress-related protein (248 aa).

Belongs to the REF/SRPP family.

This Vitis riparia (Frost grape) protein is Stress-related protein (SRP).